We begin with the raw amino-acid sequence, 221 residues long: Imidazole glycerol phosphate synthase subunit HisH (221 aa).

The Glutamine amidotransferase type-1 domain maps to Asp-9 to Gln-221. Residue Cys-84 is the Nucleophile of the active site. Residues His-202 and Glu-204 contribute to the active site.

In terms of assembly, heterodimer of HisH and HisF.

Its subcellular location is the cytoplasm. It catalyses the reaction 5-[(5-phospho-1-deoxy-D-ribulos-1-ylimino)methylamino]-1-(5-phospho-beta-D-ribosyl)imidazole-4-carboxamide + L-glutamine = D-erythro-1-(imidazol-4-yl)glycerol 3-phosphate + 5-amino-1-(5-phospho-beta-D-ribosyl)imidazole-4-carboxamide + L-glutamate + H(+). The enzyme catalyses L-glutamine + H2O = L-glutamate + NH4(+). It functions in the pathway amino-acid biosynthesis; L-histidine biosynthesis; L-histidine from 5-phospho-alpha-D-ribose 1-diphosphate: step 5/9. Functionally, IGPS catalyzes the conversion of PRFAR and glutamine to IGP, AICAR and glutamate. The HisH subunit catalyzes the hydrolysis of glutamine to glutamate and ammonia as part of the synthesis of IGP and AICAR. The resulting ammonia molecule is channeled to the active site of HisF. The sequence is that of Imidazole glycerol phosphate synthase subunit HisH from Shewanella oneidensis (strain ATCC 700550 / JCM 31522 / CIP 106686 / LMG 19005 / NCIMB 14063 / MR-1).